Here is a 79-residue protein sequence, read N- to C-terminus: Small ribosomal subunit protein bS18 (79 aa).

It belongs to the bacterial ribosomal protein bS18 family. As to quaternary structure, part of the 30S ribosomal subunit. Forms a tight heterodimer with protein bS6.

Its function is as follows. Binds as a heterodimer with protein bS6 to the central domain of the 16S rRNA, where it helps stabilize the platform of the 30S subunit. The protein is Small ribosomal subunit protein bS18 of Renibacterium salmoninarum (strain ATCC 33209 / DSM 20767 / JCM 11484 / NBRC 15589 / NCIMB 2235).